The primary structure comprises 237 residues: Uridylate kinase (237 aa).

Residue 9-12 (KLSG) participates in ATP binding. Glycine 51 contributes to the UMP binding site. ATP is bound by residues glycine 52 and arginine 56. Residues aspartate 71 and 132–139 (CGNPFFTT) contribute to the UMP site. 3 residues coordinate ATP: threonine 159, tyrosine 165, and aspartate 168.

It belongs to the UMP kinase family. In terms of assembly, homohexamer.

It is found in the cytoplasm. The catalysed reaction is UMP + ATP = UDP + ADP. Its pathway is pyrimidine metabolism; CTP biosynthesis via de novo pathway; UDP from UMP (UMPK route): step 1/1. With respect to regulation, inhibited by UTP. Its function is as follows. Catalyzes the reversible phosphorylation of UMP to UDP. In Prochlorococcus marinus (strain MIT 9313), this protein is Uridylate kinase.